We begin with the raw amino-acid sequence, 174 residues long: NAD(P)H-quinone oxidoreductase subunit J, chloroplastic (174 aa).

The protein belongs to the complex I 30 kDa subunit family. As to quaternary structure, NDH is composed of at least 16 different subunits, 5 of which are encoded in the nucleus.

It is found in the plastid. It localises to the chloroplast thylakoid membrane. The enzyme catalyses a plastoquinone + NADH + (n+1) H(+)(in) = a plastoquinol + NAD(+) + n H(+)(out). It catalyses the reaction a plastoquinone + NADPH + (n+1) H(+)(in) = a plastoquinol + NADP(+) + n H(+)(out). Functionally, NDH shuttles electrons from NAD(P)H:plastoquinone, via FMN and iron-sulfur (Fe-S) centers, to quinones in the photosynthetic chain and possibly in a chloroplast respiratory chain. The immediate electron acceptor for the enzyme in this species is believed to be plastoquinone. Couples the redox reaction to proton translocation, and thus conserves the redox energy in a proton gradient. The protein is NAD(P)H-quinone oxidoreductase subunit J, chloroplastic of Mesostigma viride (Green alga).